The sequence spans 305 residues: Sulfate adenylyltransferase subunit 2 (305 aa).

The protein belongs to the PAPS reductase family. CysD subfamily. In terms of assembly, heterodimer composed of CysD, the smaller subunit, and CysN.

It catalyses the reaction sulfate + ATP + H(+) = adenosine 5'-phosphosulfate + diphosphate. Its pathway is sulfur metabolism; hydrogen sulfide biosynthesis; sulfite from sulfate: step 1/3. With CysN forms the ATP sulfurylase (ATPS) that catalyzes the adenylation of sulfate producing adenosine 5'-phosphosulfate (APS) and diphosphate, the first enzymatic step in sulfur assimilation pathway. APS synthesis involves the formation of a high-energy phosphoric-sulfuric acid anhydride bond driven by GTP hydrolysis by CysN coupled to ATP hydrolysis by CysD. In Pseudomonas putida (strain ATCC 700007 / DSM 6899 / JCM 31910 / BCRC 17059 / LMG 24140 / F1), this protein is Sulfate adenylyltransferase subunit 2.